Reading from the N-terminus, the 215-residue chain is L-fuculose phosphate aldolase (215 aa).

Substrate is bound by residues 28–29 (GN), 43–44 (TG), and 71–72 (SS). The active-site Proton donor/acceptor is E73. Zn(2+)-binding residues include E73, H92, H94, and H155.

It belongs to the aldolase class II family. AraD/FucA subfamily. Homotetramer. Zn(2+) serves as cofactor.

It catalyses the reaction L-fuculose 1-phosphate = (S)-lactaldehyde + dihydroxyacetone phosphate. The protein operates within carbohydrate degradation; L-fucose degradation; L-lactaldehyde and glycerone phosphate from L-fucose: step 3/3. Functionally, involved in the degradation of L-fucose and D-arabinose. Catalyzes the reversible cleavage of L-fuculose 1-phosphate (Fuc1P) to yield dihydroxyacetone phosphate (DHAP) and L-lactaldehyde. The protein is L-fuculose phosphate aldolase of Escherichia coli O157:H7.